The sequence spans 381 residues: Estradiol 17-beta-dehydrogenase 2 (381 aa).

A helical; Signal-anchor for type II membrane protein transmembrane segment spans residues 4-24 (FASESAWLCLAAAAVLGGTLL). Residue 83–112 (QKAVLVTGADSGFGHGLAKHLDKLGFTVFA) coordinates NAD(+). Position 220 (Ser-220) interacts with substrate. Residue Tyr-233 is the Proton acceptor of the active site.

Belongs to the short-chain dehydrogenases/reductases (SDR) family. As to quaternary structure, homodimer.

It localises to the endoplasmic reticulum membrane. It catalyses the reaction 17beta-estradiol + NAD(+) = estrone + NADH + H(+). The catalysed reaction is testosterone + NAD(+) = androst-4-ene-3,17-dione + NADH + H(+). It carries out the reaction 17beta-hydroxy-5alpha-androstan-3-one + NAD(+) = 5alpha-androstan-3,17-dione + NADH + H(+). The enzyme catalyses (20S)-hydroxypregn-4-en-3-one + NAD(+) = progesterone + NADH + H(+). In terms of biological role, catalyzes the NAD-dependent oxidation of highly active 17beta-hydroxysteroids, such as estradiol (E2), testosterone (T), and dihydrotestosterone (DHT), to their less active forms and thus regulates the biological potency of these steroids. Oxidizes estradiol to estrone, testosterone to androstenedione, and dihydrotestosterone to 5alpha-androstan-3,17-dione. Also has 20-alpha-HSD activity. The chain is Estradiol 17-beta-dehydrogenase 2 (Hsd17b2) from Mus musculus (Mouse).